The chain runs to 195 residues: Putative NADH dehydrogenase/NAD(P)H nitroreductase Bcep18194_B1060 (195 aa).

The protein belongs to the nitroreductase family. HadB/RutE subfamily. Requires FMN as cofactor.

The protein is Putative NADH dehydrogenase/NAD(P)H nitroreductase Bcep18194_B1060 of Burkholderia lata (strain ATCC 17760 / DSM 23089 / LMG 22485 / NCIMB 9086 / R18194 / 383).